The primary structure comprises 218 residues: Ribose-5-phosphate isomerase A (218 aa).

Substrate contacts are provided by residues 28–31 (TGST), 81–84 (DGAD), and 94–97 (KGGG). Catalysis depends on E103, which acts as the Proton acceptor. Residue K121 coordinates substrate.

The protein belongs to the ribose 5-phosphate isomerase family. As to quaternary structure, homodimer.

The enzyme catalyses aldehydo-D-ribose 5-phosphate = D-ribulose 5-phosphate. Its pathway is carbohydrate degradation; pentose phosphate pathway; D-ribose 5-phosphate from D-ribulose 5-phosphate (non-oxidative stage): step 1/1. Its function is as follows. Catalyzes the reversible conversion of ribose-5-phosphate to ribulose 5-phosphate. This chain is Ribose-5-phosphate isomerase A, found in Aliivibrio fischeri (strain ATCC 700601 / ES114) (Vibrio fischeri).